We begin with the raw amino-acid sequence, 339 residues long: NADPH dehydrogenase (339 aa).

21–24 is a binding site for FMN; the sequence is PPMC. A substrate-binding site is contributed by Tyr26. 2 residues coordinate FMN: Ala57 and Gln99. 162–165 serves as a coordination point for substrate; the sequence is HGAH. Residues Arg215 and 307-308 each bind FMN; that span reads GR.

Belongs to the NADH:flavin oxidoreductase/NADH oxidase family. NamA subfamily. As to quaternary structure, homotetramer. FMN serves as cofactor.

The enzyme catalyses A + NADPH + H(+) = AH2 + NADP(+). Functionally, catalyzes the reduction of the double bond of an array of alpha,beta-unsaturated aldehydes and ketones. It also reduces the nitro group of nitroester and nitroaromatic compounds. It could have a role in detoxification processes. This chain is NADPH dehydrogenase, found in Clostridium acetobutylicum (strain ATCC 824 / DSM 792 / JCM 1419 / IAM 19013 / LMG 5710 / NBRC 13948 / NRRL B-527 / VKM B-1787 / 2291 / W).